We begin with the raw amino-acid sequence, 726 residues long: Mitotic spindle checkpoint protein MAD1 (726 aa).

The disordered stretch occupies residues M1 to Q30. 2 coiled-coil regions span residues A68 to I246 and S272 to D625.

Belongs to the MAD1 family. Homodimer. Part of the mitotic checkpoint complex (MCC). Interacts with MAD2 and NUA.

It localises to the nucleus envelope. In terms of biological role, required for the execution of the mitotic checkpoint which monitors the process of kinetochore-spindle attachment and delays the onset of anaphase when this process is not complete. It inhibits the activity of the anaphase promoting complex by sequestering CDC20 until all chromosomes are aligned at the metaphase plate. Required for anchoring MAD2 to the nuclear envelope. This chain is Mitotic spindle checkpoint protein MAD1, found in Arabidopsis thaliana (Mouse-ear cress).